Here is a 130-residue protein sequence, read N- to C-terminus: B1 protein (130 aa).

The signal sequence occupies residues 1-12 (LTSLILLVAVQA). Intrachain disulfides connect C28/C59 and C99/C116.

It belongs to the PBP/GOBP family. Post-translationally, N-glycosylated. In terms of tissue distribution, tubular accessory sex gland.

The protein localises to the secreted. Functionally, may be a carrier protein for lipids. In Tenebrio molitor (Yellow mealworm beetle), this protein is B1 protein.